Here is a 57-residue protein sequence, read N- to C-terminus: MSEFDAQRVAERIDIVLDILVAGDYHSAIHNLEILKAELLRQVAESTPDIPKTPWEI.

The protein belongs to the UPF0509 family.

The polypeptide is UPF0509 protein YciZ (yciZ) (Shigella flexneri).